A 218-amino-acid polypeptide reads, in one-letter code: Ribonuclease HII (218 aa).

The RNase H type-2 domain maps to Val22–Ser211. A divalent metal cation is bound by residues Asp28, Glu29, and Asp119.

This sequence belongs to the RNase HII family. The cofactor is Mn(2+). It depends on Mg(2+) as a cofactor.

Its subcellular location is the cytoplasm. The enzyme catalyses Endonucleolytic cleavage to 5'-phosphomonoester.. Endonuclease that specifically degrades the RNA of RNA-DNA hybrids. The chain is Ribonuclease HII from Maricaulis maris (strain MCS10) (Caulobacter maris).